A 613-amino-acid polypeptide reads, in one-letter code: Cleavage and polyadenylation specificity factor subunit 3-II (613 aa).

Positions 67 to 72 (HFHMDH) match the HXHXDH motif motif.

This sequence belongs to the metallo-beta-lactamase superfamily. RNA-metabolizing metallo-beta-lactamase-like family. INTS11 subfamily. As to quaternary structure, component of the CPSF complex, at least composed of CPSF160, CPSF100, CPSF73-I, CPSF73-II, CPSF30, FY and FIPS5. Interacts with CPSF30, CPSF100, CPSF160 and FY. In terms of tissue distribution, highly expressed in senescence leaves, petals, stamens, pollen and late stages of siliques with seeds. Also detected in roots, stems, leaves and seedlings.

It is found in the nucleus. In terms of biological role, component of the cleavage and polyadenylation specificity factor (CPSF) complex that play a key role in pre-mRNA 3'-end formation, recognizing the AAUAAA signal sequence and interacting with poly(A) polymerase and other factors to bring about cleavage and poly(A) addition. May function as mRNA 3'-end-processing endonuclease and also be involved in the histone 3'-end pre-mRNA processing. This Arabidopsis thaliana (Mouse-ear cress) protein is Cleavage and polyadenylation specificity factor subunit 3-II (CPSF73-II).